An 810-amino-acid chain; its full sequence is Sister chromatid cohesion 1 protein 2 (810 aa).

Disordered stretches follow at residues 200-244 (RDTT…LLEP), 273-315 (SHES…SECG), and 606-626 (MGAS…AETP). Basic and acidic residues-rich tracts occupy residues 220–234 (EPSR…HRED) and 273–310 (SHES…DRSL). Residues 606-622 (MGASSTTSGTAHQTENA) show a composition bias toward polar residues.

This sequence belongs to the rad21 family. In terms of assembly, component of the cohesin complex. Low expression in shoots, buds, siliques, leaves and roots. Found in, but not limited to, actively dividing cells: in procambium, protoderm and ground meristem in roots, and in shoot and floral meristems.

Its subcellular location is the nucleus. In terms of biological role, may be involved in sister chromatid cohesion during mitosis. In Arabidopsis thaliana (Mouse-ear cress), this protein is Sister chromatid cohesion 1 protein 2 (SYN2).